Here is a 128-residue protein sequence, read N- to C-terminus: Cytochrome c-type biogenesis protein CcmE (128 aa).

Residues 1–8 (MQKRVRNR) lie on the Cytoplasmic side of the membrane. A helical; Signal-anchor for type II membrane protein transmembrane segment spans residues 9 to 29 (LITIIICFCSACLGISIILYN). The Extracellular segment spans residues 30 to 128 (LEKNIVFFLP…KHDENYRPPQ (99 aa)). Heme is bound by residues His-120 and Tyr-124.

It belongs to the CcmE/CycJ family.

The protein localises to the cell membrane. Heme chaperone required for the biogenesis of c-type cytochromes. Transiently binds heme delivered by CcmC and transfers the heme to apo-cytochromes in a process facilitated by CcmF and CcmH. The sequence is that of Cytochrome c-type biogenesis protein CcmE from Rickettsia africae (strain ESF-5).